Reading from the N-terminus, the 578-residue chain is V-type ATP synthase alpha chain (578 aa).

228–235 is an ATP binding site; sequence GPFGSGKT.

It belongs to the ATPase alpha/beta chains family.

The catalysed reaction is ATP + H2O + 4 H(+)(in) = ADP + phosphate + 5 H(+)(out). Its function is as follows. Produces ATP from ADP in the presence of a proton gradient across the membrane. The V-type alpha chain is a catalytic subunit. This Thermus thermophilus (strain ATCC BAA-163 / DSM 7039 / HB27) protein is V-type ATP synthase alpha chain.